A 1118-amino-acid chain; its full sequence is Repetin (1118 aa).

The segment at 1 to 91 (MPQLLNSILN…VQACHHKLDS (91 aa)) is S-100-like. 2 consecutive EF-hand domains span residues 13–48 (KVFQ…LRRP) and 49–84 (NDPE…LVQA). The Ca(2+) site is built by Ser-27, Glu-32, Asp-62, Asp-64, Asn-66, Tyr-68, and Glu-73. A disordered region spans residues 94–1118 (YGSRTSSQKE…YVQEQAAYQY (1025 aa)). Residues 100–115 (SQKEHDQEGTRSHKFS) are compositionally biased toward basic and acidic residues. Positions 138-148 (SEGQHQNVQHD) are enriched in polar residues. 2 stretches are compositionally biased toward basic and acidic residues: residues 149–164 (QSQR…DTDP) and 172–186 (FHGD…RQDT). The segment covering 237–252 (GQSKTSGQQSSHGQSG) has biased composition (low complexity). The span at 259–299 (YSSQTSQQESDSYEQYGSQHQKSGNSQTERQGQNSQYGQTN) shows a compositional bias: polar residues. Repeat copies occupy residues 273–284 (QYGSQHQKSGNS), 285–296 (QTERQGQNSQYG), 297–308 (QTNKKGHSSYHE), 309–320 (QTEGQGQSFHYG), 321–332 (QKGRKDQSFQQG), 333–344 (QKGRKDQSPHLG), 345–356 (QKGRQDQSPHRG), 357–368 (QKGRQDQSPHQG), 369–380 (QKGRQDQSPHRG), 381–392 (QKGRQDQSPHQG), 393–404 (QKGRQDQSPHLG), 405–416 (QKGRQDQSPHQG), 417–428 (QKGRQDQSPHQG), 429–440 (QKGRQDQSSHQG), 441–452 (QKGRQDQSSHQG), 453–464 (QKGRQDQSSHQG), 465–476 (QKGRQDQSSHQG), 477–488 (QREGQDQNSQWH), 489–500 (RTDSQGQSFHYG), 501–512 (QTGGHSLSSHQG), 513–524 (QTDSQGQNSNWH), 525–536 (RTDSQGQSFHYG), 537–548 (QTGGQGLSSHQG), 549–560 (QTDSQGQNSNWH), 561–572 (RTDSQGQSFHFD), 573–584 (QAGREVQGSHHG), 585–596 (QTDRQSQNSNWH), 597–608 (RTDSQGQSFHFD), 609–620 (QAGKEVQGSHQG), 621–632 (QTDSQGQSSHWH), 633–644 (QTDRQGQSSQQG), 645–656 (HKDRQGQNTHQG), 657–668 (QKGRQDLSPHQG), 669–680 (QKGRQDQSPHLG), 681–692 (QKGRHDQSPHQG), 693–704 (QKGRHDQSPHQG), 705–716 (QKGRQDLSSHQG), 717–728 (QKGRQDQSPHLG), 729–740 (QKGRHDQSPHRG), 741–752 (QKGRQDQSPHQG), 753–764 (QKGRQDQSSHQG), 765–776 (QREGQDQNSHWH), 777–788 (RTDRQGQSFHYG), 789–800 (QTGGQGLSSHQG), 801–812 (QTDSQGQNSQWH), 813–824 (RTDSQGQSFHFD), 825–836 (QAGREGQSSHHG), and 837–848 (QTDRQSQSSHCG). The segment at 273–848 (QYGSQHQKSG…DRQSQSSHCG (576 aa)) is 48 X 12 AA approximate tandem repeats of Q-[KT]-[GD]-[RS]-Q-[DG]-Q-S-[PS]-H-X-G. The tract at residues 321 to 764 (QKGRKDQSFQ…GRQDQSSHQG (444 aa)) is 22 X 12 AA approximate tandem repeats of Q-K-G-R-Q-D-Q-S-P-H-Q-G. Basic and acidic residues-rich tracts occupy residues 347-363 (GRQD…RQDQ) and 371-387 (GRQD…RQDQ). The segment covering 434-466 (DQSSHQGQKGRQDQSSHQGQKGRQDQSSHQGQK) has biased composition (polar residues). Positions 467 to 481 (GRQDQSSHQGQREGQ) are enriched in basic and acidic residues. Composition is skewed to polar residues over residues 482 to 535 (DQNS…SFHY) and 543 to 570 (LSSH…QSFH). Polar residues-rich tracts occupy residues 587–606 (DRQS…QSFH) and 616–643 (GSHQ…SSQQ). Polar residues predominate over residues 710 to 726 (DLSSHQGQKGRQDQSPH). 2 stretches are compositionally biased toward basic and acidic residues: residues 731 to 747 (GRHD…RQDQ) and 755 to 769 (GRQD…REGQ). Composition is skewed to polar residues over residues 795-822 (LSSH…QSFH), 833-848 (SHHG…SHCG), and 855-864 (TENQGQNRHS). The span at 865–875 (LGTDRTRRDSY) shows a compositional bias: basic and acidic residues. Over residues 876–889 (VEQSGRSVKLSQQN) the composition is skewed to polar residues. Composition is skewed to basic and acidic residues over residues 890-908 (SREE…RREQ), 947-965 (EQDH…HSVE), 978-998 (THEE…DEQN), 1005-1045 (QTHE…KEKY), and 1056-1065 (PNREKSHMSE).

This sequence belongs to the S100-fused protein family. Post-translationally, potential substrate of transglutaminase. Some arginines are probably converted to citrullines by peptidylarginine deimidase. As to expression, detectable in the stratified internal epithelia of forestomach and tongue and to a lesser degree in normal skin epidermis, where it is restricted to the differentiated suprabasal cell layers. Overexpressed in skin tumors.

The protein localises to the secreted. Its subcellular location is the extracellular space. The protein resides in the extracellular matrix. In terms of biological role, involved in the cornified cell envelope formation. Multifunctional epidermal matrix protein. The protein is Repetin (Rptn) of Mus musculus (Mouse).